Here is a 173-residue protein sequence, read N- to C-terminus: Crossover junction endodeoxyribonuclease RuvC (173 aa).

Catalysis depends on residues D8, E67, and D139. Residues D8, E67, and D139 each coordinate Mg(2+).

This sequence belongs to the RuvC family. Homodimer which binds Holliday junction (HJ) DNA. The HJ becomes 2-fold symmetrical on binding to RuvC with unstacked arms; it has a different conformation from HJ DNA in complex with RuvA. In the full resolvosome a probable DNA-RuvA(4)-RuvB(12)-RuvC(2) complex forms which resolves the HJ. Mg(2+) is required as a cofactor.

It localises to the cytoplasm. The enzyme catalyses Endonucleolytic cleavage at a junction such as a reciprocal single-stranded crossover between two homologous DNA duplexes (Holliday junction).. The RuvA-RuvB-RuvC complex processes Holliday junction (HJ) DNA during genetic recombination and DNA repair. Endonuclease that resolves HJ intermediates. Cleaves cruciform DNA by making single-stranded nicks across the HJ at symmetrical positions within the homologous arms, yielding a 5'-phosphate and a 3'-hydroxyl group; requires a central core of homology in the junction. The consensus cleavage sequence is 5'-(A/T)TT(C/G)-3'. Cleavage occurs on the 3'-side of the TT dinucleotide at the point of strand exchange. HJ branch migration catalyzed by RuvA-RuvB allows RuvC to scan DNA until it finds its consensus sequence, where it cleaves and resolves the cruciform DNA. In Yersinia enterocolitica serotype O:8 / biotype 1B (strain NCTC 13174 / 8081), this protein is Crossover junction endodeoxyribonuclease RuvC.